Consider the following 257-residue polypeptide: Phosphate import ATP-binding protein PstB (257 aa).

One can recognise an ABC transporter domain in the interval 4 to 246 (LKLNDVNIYY…KKIFENPDQK (243 aa)). 36 to 43 (GPSGCGKS) contributes to the ATP binding site.

Belongs to the ABC transporter superfamily. Phosphate importer (TC 3.A.1.7) family. In terms of assembly, the complex is composed of two ATP-binding proteins (PstB), two transmembrane proteins (PstC and PstA) and a solute-binding protein (PstS).

The protein localises to the cell membrane. It catalyses the reaction phosphate(out) + ATP + H2O = ADP + 2 phosphate(in) + H(+). Part of the ABC transporter complex PstSACB involved in phosphate import. Responsible for energy coupling to the transport system. The sequence is that of Phosphate import ATP-binding protein PstB from Corynebacterium glutamicum (strain ATCC 13032 / DSM 20300 / JCM 1318 / BCRC 11384 / CCUG 27702 / LMG 3730 / NBRC 12168 / NCIMB 10025 / NRRL B-2784 / 534).